The chain runs to 281 residues: Nucleotide-binding protein Tpet_1006 (281 aa).

Residue 9 to 16 (GLSGAGKT) participates in ATP binding. Residue 58 to 61 (DVRS) participates in GTP binding.

This sequence belongs to the RapZ-like family.

Displays ATPase and GTPase activities. This is Nucleotide-binding protein Tpet_1006 from Thermotoga petrophila (strain ATCC BAA-488 / DSM 13995 / JCM 10881 / RKU-1).